A 48-amino-acid polypeptide reads, in one-letter code: Large ribosomal subunit protein bL33A (48 aa).

This sequence belongs to the bacterial ribosomal protein bL33 family.

The chain is Large ribosomal subunit protein bL33A from Bacillus mycoides (strain KBAB4) (Bacillus weihenstephanensis).